A 147-amino-acid polypeptide reads, in one-letter code: Large ribosomal subunit protein bL9 (147 aa).

This sequence belongs to the bacterial ribosomal protein bL9 family.

Binds to the 23S rRNA. This Bacteroides fragilis (strain ATCC 25285 / DSM 2151 / CCUG 4856 / JCM 11019 / LMG 10263 / NCTC 9343 / Onslow / VPI 2553 / EN-2) protein is Large ribosomal subunit protein bL9.